The following is a 372-amino-acid chain: N-acetyllactosaminide beta-1,3-N-acetylglucosaminyltransferase 3 (372 aa).

Residues 1–10 (MKYLRHRRPN) lie on the Cytoplasmic side of the membrane. Residues 11–31 (ATLILAIGAFTLLLFSLLVSP) traverse the membrane as a helical; Signal-anchor for type II membrane protein segment. The Lumenal segment spans residues 32–372 (PTCKVQEQPP…LTCGNQTQIY (341 aa)). N-linked (GlcNAc...) asparagine glycosylation is found at Asn-64, Asn-184, Asn-202, Asn-362, and Asn-367.

This sequence belongs to the glycosyltransferase 31 family. Expressed in colon, jejunum, stomach, esophagus, placenta and trachea.

The protein resides in the golgi apparatus membrane. It carries out the reaction a 3-O-{beta-D-galactosyl-(1-&gt;3)-[N-acetyl-beta-D-glucosaminyl-(1-&gt;6)]-N-acetyl-alpha-D-galactosaminyl}-L-threonyl-[protein] + UDP-N-acetyl-alpha-D-glucosamine = 3-O-{beta-D-GlcNAc-(1-&gt;3)-beta-D-Gal-(1-&gt;3)-[beta-D-GlcNAc-(1-&gt;6)]-alpha-D-GalNAc}-L-threonyl-[protein] + UDP + H(+). The catalysed reaction is 3-O-{beta-D-galactosyl-(1-&gt;3)-[N-acetyl-beta-D-glucosaminyl-(1-&gt;6)]-N-acetyl-alpha-D-galactosaminyl}-L-seryl-[protein] + UDP-N-acetyl-alpha-D-glucosamine = 3-O-{beta-D-GlcNAc-(1-&gt;3)-beta-D-Gal-(1-&gt;3)-[beta-D-GlcNAc-(1-&gt;6)]-alpha-D-GalNAc}-L-seryl-[protein] + UDP + H(+). The enzyme catalyses a beta-D-galactosyl-(1-&gt;4)-N-acetyl-beta-D-glucosaminyl derivative + UDP-N-acetyl-alpha-D-glucosamine = an N-acetyl-beta-D-glucosaminyl-(1-&gt;3)-beta-D-galactosyl-(1-&gt;4)-N-acetyl-beta-D-glucosaminyl derivative + UDP + H(+). It functions in the pathway protein modification; protein glycosylation. Its function is as follows. Beta-1,3-N-acetylglucosaminyltransferase involved in the synthesis of poly-N-acetyllactosamine. Has activity for type 2 oligosaccharides. Also acts as a core1-1,3-N-acetylglucosaminyltransferase (Core1-beta3GlcNAcT) to form the 6-sulfo sialyl Lewis x on extended core1 O-glycans. This Homo sapiens (Human) protein is N-acetyllactosaminide beta-1,3-N-acetylglucosaminyltransferase 3 (B3GNT3).